Here is a 107-residue protein sequence, read N- to C-terminus: Large ribosomal subunit protein uL24 (107 aa).

The protein belongs to the universal ribosomal protein uL24 family. Part of the 50S ribosomal subunit.

Its function is as follows. One of two assembly initiator proteins, it binds directly to the 5'-end of the 23S rRNA, where it nucleates assembly of the 50S subunit. Functionally, one of the proteins that surrounds the polypeptide exit tunnel on the outside of the subunit. The sequence is that of Large ribosomal subunit protein uL24 from Nitrosomonas eutropha (strain DSM 101675 / C91 / Nm57).